Reading from the N-terminus, the 1070-residue chain is [F-actin]-monooxygenase MICAL1 (1070 aa).

Residues 1 to 489 (MASTISTNPA…RDLYDMEAKE (489 aa)) form a monooxygenase domain region. Residues Cys95, 114–116 (EKR), 121–123 (RHN), Phe181, Tyr293, and Asp393 each bind FAD. Position 475 is a phosphothreonine (Thr475). The 105-residue stretch at 508 to 612 (VGSQEELLRW…YLSHFHSAFK (105 aa)) folds into the Calponin-homology (CH) domain. The disordered stretch occupies residues 643–690 (QRTRTQENGEDAGGKKPRLEVKAETPSTEEPPVPKPDEPMTPPSQQQD). Over residues 646-665 (RTQENGEDAGGKKPRLEVKA) the composition is skewed to basic and acidic residues. The span at 671-684 (EEPPVPKPDEPMTP) shows a compositional bias: pro residues. Positions 695–757 (DLCALCGQHL…LQHLPQTGHE (63 aa)) constitute an LIM zinc-binding domain. Zn(2+) is bound by residues Cys697, Cys700, His718, Cys721, Cys724, Cys727, Cys747, and His750. Disordered stretches follow at residues 754-838 (TGHE…RSCS) and 865-887 (MEMG…EDVP). A compositionally biased stretch (basic and acidic residues) spans 755–766 (GHEEDSSDRGPE). Residues 770-781 (LPMSSENNTPSG) show a composition bias toward polar residues. Residues Ser793, Ser875, and Ser876 each carry the phosphoserine modification. A compositionally biased stretch (acidic residues) spans 876 to 887 (SEEETEEEEDVP). An important for interaction with RAB8A region spans residues 904–1070 (GTMNNYPTWR…ELASEPGVQG (167 aa)). One can recognise a bMERB domain in the interval 921–1070 (KEEEMKRFCK…ELASEPGVQG (150 aa)). Residues 928-1030 (FCKAQAIQRR…EETLKTAADR (103 aa)) adopt a coiled-coil conformation. Position 1060 is a phosphoserine (Ser1060).

The protein belongs to the Mical family. Interacts with STK38 and STK38L. Associates with the SH3 domain of NEDD9. Interacts with VIM and PLXNA3. Interacts with RAB1B, RAB8A, RAB10, RAB13 and RAB15 (in their GTP-bound forms); binding to RAB1B is of low affinity compared to other Rab proteins; at least in case of RAB8A and RAB10 can bind 2 molecules of the Rab proteins simultaneously. Interacts with GRAF1/ARHGAP26, GRAF2/ARHGAP10, RAB8A, RAB8B and RAB10; may bind simultaneously to GRAFs and Rabs and connects GRAFs to Rabs. Does not interact with RAB1 and RAB11A. It depends on FAD as a cofactor.

The protein localises to the cytoplasm. It is found in the cytoskeleton. It localises to the endosome membrane. Its subcellular location is the midbody. It catalyses the reaction L-methionyl-[F-actin] + NADPH + O2 + H(+) = L-methionyl-(R)-S-oxide-[F-actin] + NADP(+) + H2O. It carries out the reaction NADPH + O2 + H(+) = H2O2 + NADP(+). In terms of biological role, monooxygenase that promotes depolymerization of F-actin by mediating oxidation of specific methionine residues on actin to form methionine-sulfoxide, resulting in actin filament disassembly and preventing repolymerization. In the absence of actin, it also functions as a NADPH oxidase producing H(2)O(2). Acts as a cytoskeletal regulator that connects NEDD9 to intermediate filaments. Also acts as a negative regulator of apoptosis via its interaction with STK38 and STK38L; acts by antagonizing STK38 and STK38L activation by MST1/STK4. Involved in regulation of lamina-specific connectivity in the nervous system such as the development of lamina-restricted hippocampal connections. Through redox regulation of the actin cytoskeleton controls the intracellular distribution of secretory vesicles containing L1/neurofascin/NgCAM family proteins in neurons, thereby regulating their cell surface levels. May act as Rab effector protein and play a role in vesicle trafficking. Promotes endosomal tubule extension by associating with RAB8 (RAB8A or RAB8B), RAB10 and GRAF (GRAF1/ARHGAP26 or GRAF2/ARHGAP10) on the endosomal membrane which may connect GRAFs to Rabs, thereby participating in neosynthesized Rab8-Rab10-Rab11-dependent protein export. This is [F-actin]-monooxygenase MICAL1 (MICAL1) from Bos taurus (Bovine).